The following is a 386-amino-acid chain: Alanine racemase (386 aa).

Lys-38 (proton acceptor; specific for D-alanine) is an active-site residue. Lys-38 carries the N6-(pyridoxal phosphate)lysine modification. Arg-136 provides a ligand contact to substrate. Catalysis depends on Tyr-267, which acts as the Proton acceptor; specific for L-alanine. Substrate is bound at residue Met-315.

The protein belongs to the alanine racemase family. Pyridoxal 5'-phosphate is required as a cofactor.

It carries out the reaction L-alanine = D-alanine. It functions in the pathway amino-acid biosynthesis; D-alanine biosynthesis; D-alanine from L-alanine: step 1/1. In terms of biological role, catalyzes the interconversion of L-alanine and D-alanine. May also act on other amino acids. This Clostridium perfringens (strain SM101 / Type A) protein is Alanine racemase (alr).